A 188-amino-acid polypeptide reads, in one-letter code: Nicotinamide-nucleotide adenylyltransferase (188 aa).

The protein belongs to the archaeal NMN adenylyltransferase family.

It localises to the cytoplasm. It catalyses the reaction beta-nicotinamide D-ribonucleotide + ATP + H(+) = diphosphate + NAD(+). The protein operates within cofactor biosynthesis; NAD(+) biosynthesis; NAD(+) from nicotinamide D-ribonucleotide: step 1/1. In Thermococcus kodakarensis (strain ATCC BAA-918 / JCM 12380 / KOD1) (Pyrococcus kodakaraensis (strain KOD1)), this protein is Nicotinamide-nucleotide adenylyltransferase.